The chain runs to 433 residues: Putative tartrate transporter (433 aa).

11 helical membrane-spanning segments follow: residues 17–37, 47–67, 82–102, 113–133, 139–159, 177–197, 242–262, 275–295, 314–334, 350–370, and 395–415; these read IVPFIMLLYFVAFLDRVNIGF, GFSSTVFGIGAGIFFVGYFLF, IWIARVMITWGIVSGLMAFVQ, LLGVAEAGFFPGIILYLSFWF, AAVTAIFMAAAPLSTVLGSPI, WMFLIEAAPAVILGVVVLFYL, VIALALVYFGTSAGLYTLGIW, LQVGFINAVPGIFAVAAMVLW, LLAAVGLAFATGATSVFTVLI, LWSMPTLFLSGPAAAAGIATI, and FAGGLYFVAGLLVVSAIVTLV.

This sequence belongs to the major facilitator superfamily. Phthalate permease family.

The protein resides in the cell membrane. In terms of biological role, component of the tartrate utilization system and may allow entry of tartrate and tartrate dehydrogenase. This chain is Putative tartrate transporter (ttuB), found in Agrobacterium vitis (Rhizobium vitis).